A 492-amino-acid chain; its full sequence is Protein PAIR1 (492 aa).

A coiled-coil region spans residues 166–186 (VDSVQSDVMQLNRAMKEASLD). The Nuclear localization signal motif lies at 479 to 483 (KRRRR).

In terms of assembly, interacts with CRC1. In terms of tissue distribution, expressed in reproductive organs, but not in vegetative organs.

The protein resides in the nucleus. In terms of biological role, involved in spore formation. Plays an essential role in the establishment of homologous chromosome pairing in early meiosis. This is Protein PAIR1 (PAIR1) from Oryza sativa subsp. japonica (Rice).